The following is a 212-amino-acid chain: Large ribosomal subunit protein uL3 (212 aa).

The segment at 129 to 156 is disordered; sequence RRGPMGHGSKNHRAPGSTGAGTTPGRIY. Low complexity predominate over residues 142–153; sequence APGSTGAGTTPG.

It belongs to the universal ribosomal protein uL3 family. As to quaternary structure, part of the 50S ribosomal subunit. Forms a cluster with proteins L14 and L19.

In terms of biological role, one of the primary rRNA binding proteins, it binds directly near the 3'-end of the 23S rRNA, where it nucleates assembly of the 50S subunit. The protein is Large ribosomal subunit protein uL3 of Acaryochloris marina (strain MBIC 11017).